The chain runs to 150 residues: SsrA-binding protein (150 aa).

This sequence belongs to the SmpB family.

It localises to the cytoplasm. Required for rescue of stalled ribosomes mediated by trans-translation. Binds to transfer-messenger RNA (tmRNA), required for stable association of tmRNA with ribosomes. tmRNA and SmpB together mimic tRNA shape, replacing the anticodon stem-loop with SmpB. tmRNA is encoded by the ssrA gene; the 2 termini fold to resemble tRNA(Ala) and it encodes a 'tag peptide', a short internal open reading frame. During trans-translation Ala-aminoacylated tmRNA acts like a tRNA, entering the A-site of stalled ribosomes, displacing the stalled mRNA. The ribosome then switches to translate the ORF on the tmRNA; the nascent peptide is terminated with the 'tag peptide' encoded by the tmRNA and targeted for degradation. The ribosome is freed to recommence translation, which seems to be the essential function of trans-translation. The chain is SsrA-binding protein from Nitratiruptor sp. (strain SB155-2).